The chain runs to 731 residues: 1,4-alpha-glucan branching enzyme GlgB (731 aa).

The active-site Nucleophile is aspartate 409. Glutamate 462 (proton donor) is an active-site residue.

Belongs to the glycosyl hydrolase 13 family. GlgB subfamily. As to quaternary structure, monomer.

The catalysed reaction is Transfers a segment of a (1-&gt;4)-alpha-D-glucan chain to a primary hydroxy group in a similar glucan chain.. It functions in the pathway glycan biosynthesis; glycogen biosynthesis. Functionally, catalyzes the formation of the alpha-1,6-glucosidic linkages in glycogen by scission of a 1,4-alpha-linked oligosaccharide from growing alpha-1,4-glucan chains and the subsequent attachment of the oligosaccharide to the alpha-1,6 position. The chain is 1,4-alpha-glucan branching enzyme GlgB from Roseobacter denitrificans (strain ATCC 33942 / OCh 114) (Erythrobacter sp. (strain OCh 114)).